Consider the following 136-residue polypeptide: uncharacterized protein (136 aa).

4 consecutive transmembrane segments (helical) span residues 10–32 (SAGI…FIWI), 44–66 (LRCG…ILHF), 70–89 (VLLL…KTLL), and 102–124 (IAGV…WLLF).

It is found in the cell membrane. This is an uncharacterized protein from Archaeoglobus fulgidus (strain ATCC 49558 / DSM 4304 / JCM 9628 / NBRC 100126 / VC-16).